We begin with the raw amino-acid sequence, 116 residues long: Ribonuclease P protein component 2 (116 aa).

The protein belongs to the eukaryotic/archaeal RNase P protein component 2 family. In terms of assembly, consists of a catalytic RNA component and at least 4-5 protein subunits.

It is found in the cytoplasm. It carries out the reaction Endonucleolytic cleavage of RNA, removing 5'-extranucleotides from tRNA precursor.. Part of ribonuclease P, a protein complex that generates mature tRNA molecules by cleaving their 5'-ends. The sequence is that of Ribonuclease P protein component 2 from Methanosarcina mazei (strain ATCC BAA-159 / DSM 3647 / Goe1 / Go1 / JCM 11833 / OCM 88) (Methanosarcina frisia).